The chain runs to 183 residues: Ferritin light chain 1 (183 aa).

The Ferritin-like diiron domain maps to 7-156; the sequence is QNYSTEVEAA…NHLTNLRRVA (150 aa). Glutamate 54, glutamate 57, glutamate 58, glutamate 61, and glutamate 64 together coordinate Fe cation.

This sequence belongs to the ferritin family. In terms of assembly, oligomer of 24 subunits. There are two types of subunits: L (light) chain and H (heavy) chain. The major chain can be light or heavy, depending on the species and tissue type. The functional molecule forms a roughly spherical shell with a diameter of 12 nm and contains a central cavity into which the insoluble mineral iron core is deposited. Interacts with NCOA4.

It localises to the cytoplasm. The protein resides in the cytoplasmic vesicle. The protein localises to the autophagosome. Its subcellular location is the autolysosome. Its function is as follows. Stores iron in a soluble, non-toxic, readily available form. Important for iron homeostasis. Iron is taken up in the ferrous form and deposited as ferric hydroxides after oxidation. Also plays a role in delivery of iron to cells. Mediates iron uptake in capsule cells of the developing kidney. Degraded to release iron upon autophagy activation by nutrient starvation. The polypeptide is Ferritin light chain 1 (Ftl1) (Mus musculus (Mouse)).